A 987-amino-acid chain; its full sequence is Rho GTPase-activating protein 6 (987 aa).

Positions 1-21 are enriched in polar residues; sequence MSAQSLLHSVFSCSSPASGGT. Disordered stretches follow at residues 1–60, 76–117, and 144–170; these read MSAQ…RGST, SRLA…SGSF, and GSGSASSRSPASILSSSGGGPNGIFSS. S37 is subject to Phosphoserine. The segment covering 44–57 has biased composition (gly residues); sequence GGCGSEMGAEGGLR. Residues 100-115 show a composition bias toward polar residues; that stretch reads SSFSTPSTPQEKSPSG. Positions 144–159 are enriched in low complexity; sequence GSGSASSRSPASILSS. The residue at position 265 (S265) is a Phosphoserine. The tract at residues 324–363 is disordered; sequence KQNKELSSSNSSLSSTSETPNESTSPNTPEPAPRARRRGA. Residues 328–350 are compositionally biased toward low complexity; it reads ELSSSNSSLSSTSETPNESTSPN. Residues 344-354 carry the SH3-binding motif; it reads NESTSPNTPEP. S365 carries the post-translational modification Phosphoserine. The Rho-GAP domain occupies 403–604; the sequence is LSLNPIYRQV…KMIENYEALF (202 aa). The interval 641–676 is disordered; it reads DILQTEVSFSMGGRHSSTDSNKASSGDISPYDNNSP. The segment covering 658–676 has biased composition (polar residues); it reads TDSNKASSGDISPYDNNSP. A phosphoserine mark is found at S669, S675, S682, S713, S758, S776, S781, S790, and S824. The interval 709 to 731 is disordered; that stretch reads GHLSSPKSKSRESSPGPRLGKEM. Disordered stretches follow at residues 825–847 and 863–953; these read TPHIQDGSRGTRRPAASSDPFLS and WLQS…QDKQ. The segment covering 939–948 has biased composition (low complexity); sequence LSSAYSLSAS. A phosphoserine mark is found at S941 and S944.

Expressed in retina and lung.

It is found in the cytoplasm. In terms of biological role, GTPase activator for the Rho-type GTPases by converting them to an inactive GDP-bound state. Could regulate the interactions of signaling molecules with the actin cytoskeleton. Promotes continuous elongation of cytoplasmic processes during cell motility and simultaneous retraction of the cell body changing the cell morphology. The protein is Rho GTPase-activating protein 6 (Arhgap6) of Mus musculus (Mouse).